Consider the following 183-residue polypeptide: Pyruvoyl-dependent arginine decarboxylase 2 (183 aa).

Ser-41 is modified (pyruvic acid (Ser)).

Belongs to the PdaD family. Requires pyruvate as cofactor.

It carries out the reaction L-arginine + H(+) = agmatine + CO2. The sequence is that of Pyruvoyl-dependent arginine decarboxylase 2 (pdaD2) from Methanosarcina acetivorans (strain ATCC 35395 / DSM 2834 / JCM 12185 / C2A).